We begin with the raw amino-acid sequence, 1046 residues long: Probable inorganic carbon transporter subunit DabA1 (1046 aa).

Zn(2+) is bound by residues cysteine 462, aspartate 464, histidine 721, and cysteine 736.

It belongs to the inorganic carbon transporter (TC 9.A.2) DabA family. Forms a complex with DabB1. It depends on Zn(2+) as a cofactor.

Its subcellular location is the cell inner membrane. In terms of biological role, part of an energy-coupled inorganic carbon pump. The chain is Probable inorganic carbon transporter subunit DabA1 from Halothiobacillus neapolitanus (strain ATCC 23641 / c2) (Thiobacillus neapolitanus).